Consider the following 123-residue polypeptide: MNQPERYELIELMGLPKVTYELDSKSPNAAVVTLEKEDHTLANMLANQLLSDERVLFAGYKVPHPLNHNFILRVQTVEDCSPKQVIVDAAKSLITHLEEIKVNFMREWELKMISVEGVEMEFS.

Belongs to the archaeal Rpo11/eukaryotic RPB11/RPC19 RNA polymerase subunit family. In terms of assembly, component of the RNA polymerase II (Pol II) complex consisting of 12 subunits.

It localises to the nucleus. Its function is as follows. DNA-dependent RNA polymerase catalyzes the transcription of DNA into RNA using the four ribonucleoside triphosphates as substrates. Component of RNA polymerase II which synthesizes mRNA precursors and many functional non-coding RNAs. Pol II is the central component of the basal RNA polymerase II transcription machinery. It is composed of mobile elements that move relative to each other. RPB11 is part of the core element with the central large cleft. The sequence is that of DNA-directed RNA polymerase II subunit RPB11 (rpb11) from Schizosaccharomyces pombe (strain 972 / ATCC 24843) (Fission yeast).